Reading from the N-terminus, the 227-residue chain is CDP-diacylglycerol--inositol 3-phosphatidyltransferase 1 (227 aa).

Transmembrane regions (helical) follow at residues 12-36 and 42-61; these read LSVY…AFAV and PLFS…DGWV. Residues aspartate 55 and aspartate 58 each coordinate Mg(2+). Residues glycine 59, arginine 63, and serine 69 each coordinate a CDP-1,2-diacyl-sn-glycerol. The next 4 membrane-spanning stretches (helical) occupy residues 73–95, 101–122, 142–165, and 177–200; these read AVLD…SQIY, FLSL…TFLA, YGNR…LLLI, and VVAT…GWSM. Residues aspartate 76 and aspartate 80 each contribute to the Mg(2+) site. Catalysis depends on aspartate 80, which acts as the Proton acceptor.

This sequence belongs to the CDP-alcohol phosphatidyltransferase class-I family. Mg(2+) serves as cofactor. Mn(2+) is required as a cofactor. Expressed in stems, flowers, shoots and roots. Present in epidermal tissues.

It localises to the membrane. The enzyme catalyses a CDP-1,2-diacyl-sn-glycerol + myo-inositol = a 1,2-diacyl-sn-glycero-3-phospho-(1D-myo-inositol) + CMP + H(+). Its function is as follows. Catalyzes the biosynthesis of phosphatidylinositol (PtdIns) as well as PtdIns:inositol exchange reaction. May thus act to reduce an excessive cellular PtdIns content. The exchange activity is due to the reverse reaction of PtdIns synthase and is dependent on CMP, which is tightly bound to the enzyme. This Arabidopsis thaliana (Mouse-ear cress) protein is CDP-diacylglycerol--inositol 3-phosphatidyltransferase 1 (PIS1).